The primary structure comprises 401 residues: Exodeoxyribonuclease 7 large subunit (401 aa).

The protein belongs to the XseA family. Heterooligomer composed of large and small subunits.

Its subcellular location is the cytoplasm. It catalyses the reaction Exonucleolytic cleavage in either 5'- to 3'- or 3'- to 5'-direction to yield nucleoside 5'-phosphates.. In terms of biological role, bidirectionally degrades single-stranded DNA into large acid-insoluble oligonucleotides, which are then degraded further into small acid-soluble oligonucleotides. The polypeptide is Exodeoxyribonuclease 7 large subunit (Clostridium botulinum (strain Langeland / NCTC 10281 / Type F)).